The following is a 126-amino-acid chain: Cystatin-like protein (126 aa).

The short motif at 72–76 (QVVAG) is the Secondary area of contact element. A disulfide bond links Cys-94 and Cys-115.

This sequence belongs to the cystatin family.

This is Cystatin-like protein (Cys) from Drosophila melanogaster (Fruit fly).